The sequence spans 75 residues: Dermaseptin-S11 (75 aa).

Positions 1–22 (MAFLKKSLFLVLFLGMVSLSIC) are cleaved as a signal peptide. A propeptide spanning residues 23–45 (EEEKRENEDEEEQEDDEQSEEKR) is cleaved from the precursor. The disordered stretch occupies residues 25-44 (EKRENEDEEEQEDDEQSEEK). Residues 30-41 (EDEEEQEDDEQS) are compositionally biased toward acidic residues.

This sequence belongs to the frog skin active peptide (FSAP) family. Dermaseptin subfamily. As to expression, expressed by the skin glands.

The protein localises to the secreted. The protein resides in the target cell membrane. In terms of biological role, antimicrobial peptide with activity against Gram-positive and Gram-negative bacteria, and fungi. Has hemolytic activity. This is Dermaseptin-S11 from Phyllomedusa sauvagei (Sauvage's leaf frog).